A 338-amino-acid polypeptide reads, in one-letter code: Ferrochelatase (338 aa).

His210 and Glu291 together coordinate Fe cation.

This sequence belongs to the ferrochelatase family.

Its subcellular location is the cytoplasm. The enzyme catalyses heme b + 2 H(+) = protoporphyrin IX + Fe(2+). It functions in the pathway porphyrin-containing compound metabolism; protoheme biosynthesis; protoheme from protoporphyrin-IX: step 1/1. Its function is as follows. Catalyzes the ferrous insertion into protoporphyrin IX. The protein is Ferrochelatase of Helicobacter acinonychis (strain Sheeba).